We begin with the raw amino-acid sequence, 390 residues long: Phosphopentomutase (390 aa).

6 residues coordinate Mn(2+): D12, D284, H289, D325, H326, and H337.

This sequence belongs to the phosphopentomutase family. The cofactor is Mn(2+).

The protein resides in the cytoplasm. The enzyme catalyses 2-deoxy-alpha-D-ribose 1-phosphate = 2-deoxy-D-ribose 5-phosphate. It catalyses the reaction alpha-D-ribose 1-phosphate = D-ribose 5-phosphate. Its pathway is carbohydrate degradation; 2-deoxy-D-ribose 1-phosphate degradation; D-glyceraldehyde 3-phosphate and acetaldehyde from 2-deoxy-alpha-D-ribose 1-phosphate: step 1/2. Isomerase that catalyzes the conversion of deoxy-ribose 1-phosphate (dRib-1-P) and ribose 1-phosphate (Rib-1-P) to deoxy-ribose 5-phosphate (dRib-5-P) and ribose 5-phosphate (Rib-5-P), respectively. This Macrococcus caseolyticus (strain JCSC5402) (Macrococcoides caseolyticum) protein is Phosphopentomutase.